Here is a 445-residue protein sequence, read N- to C-terminus: Elongation factor 1-alpha (445 aa).

Residues 5-230 (KVHISLVVIG…DNLEPPKRPS (226 aa)) form the tr-type G domain. The G1 stretch occupies residues 14–21 (GHVDSGKS). Residue 14 to 21 (GHVDSGKS) coordinates GTP. Lysine 55 bears the N6,N6-dimethyllysine mark. The G2 stretch occupies residues 70–74 (CITID). The residue at position 79 (lysine 79) is an N6,N6,N6-trimethyllysine. A G3 region spans residues 91–94 (DAPG). GTP-binding positions include 91-95 (DAPGH) and 153-156 (NKFD). Residues 153–156 (NKFD) are G4. Position 187 is an N6,N6,N6-trimethyllysine (lysine 187). The tract at residues 194–196 (SGW) is G5. At lysine 261 the chain carries N6-methyllysine. N6,N6,N6-trimethyllysine is present on residues lysine 306 and lysine 396.

It belongs to the TRAFAC class translation factor GTPase superfamily. Classic translation factor GTPase family. EF-Tu/EF-1A subfamily.

The protein resides in the cytoplasm. This protein promotes the GTP-dependent binding of aminoacyl-tRNA to the A-site of ribosomes during protein biosynthesis. In Euglena gracilis, this protein is Elongation factor 1-alpha (TEF).